A 337-amino-acid polypeptide reads, in one-letter code: Ribosomal RNA small subunit methyltransferase C (337 aa).

Belongs to the methyltransferase superfamily. RsmC family. As to quaternary structure, monomer.

The protein resides in the cytoplasm. It catalyses the reaction guanosine(1207) in 16S rRNA + S-adenosyl-L-methionine = N(2)-methylguanosine(1207) in 16S rRNA + S-adenosyl-L-homocysteine + H(+). Functionally, specifically methylates the guanine in position 1207 of 16S rRNA in the 30S particle. In Proteus mirabilis (strain HI4320), this protein is Ribosomal RNA small subunit methyltransferase C.